The primary structure comprises 249 residues: Undecaprenyl-diphosphatase (249 aa).

Transmembrane regions (helical) follow at residues 11–31, 35–55, 80–100, 101–121, 135–155, 180–200, 202–222, and 226–246; these read GLTEFLPISSSGHLAIFTAIF, PDVGYFAFLHLATFLAVLIFV, LVLSTIPAVIVGLCFGDFIES, VFSSTFLIGVFLSITGILMLL, IPYLDALIVGIFQAFSVLPGI, FLMSLPVTFGAGILELQKVAF, TEQIFGFFISFLTGLLGLYLV, and VIGGKLKIFGYYCVLASFFVL.

It belongs to the UppP family.

The protein localises to the cell membrane. The enzyme catalyses di-trans,octa-cis-undecaprenyl diphosphate + H2O = di-trans,octa-cis-undecaprenyl phosphate + phosphate + H(+). Functionally, catalyzes the dephosphorylation of undecaprenyl diphosphate (UPP). The sequence is that of Undecaprenyl-diphosphatase from Methanococcus maripaludis (strain C6 / ATCC BAA-1332).